We begin with the raw amino-acid sequence, 338 residues long: Lipoate-protein ligase A (338 aa).

Residues 29 to 216 (PATQRVLFLW…AFFAHYGERV (188 aa)) form the BPL/LPL catalytic domain. ATP is bound by residues Arg-71, 76–79 (GAVF), and Lys-134. Residue Lys-134 participates in (R)-lipoate binding.

The protein belongs to the LplA family. Monomer.

It is found in the cytoplasm. It catalyses the reaction L-lysyl-[lipoyl-carrier protein] + (R)-lipoate + ATP = N(6)-[(R)-lipoyl]-L-lysyl-[lipoyl-carrier protein] + AMP + diphosphate + H(+). Its pathway is protein modification; protein lipoylation via exogenous pathway; protein N(6)-(lipoyl)lysine from lipoate: step 1/2. It functions in the pathway protein modification; protein lipoylation via exogenous pathway; protein N(6)-(lipoyl)lysine from lipoate: step 2/2. Catalyzes both the ATP-dependent activation of exogenously supplied lipoate to lipoyl-AMP and the transfer of the activated lipoyl onto the lipoyl domains of lipoate-dependent enzymes. The polypeptide is Lipoate-protein ligase A (Escherichia coli (strain 55989 / EAEC)).